The sequence spans 691 residues: Elongation factor G (691 aa).

Positions 8–282 (NKTRNIGIMA…AVVEFLPAPV (275 aa)) constitute a tr-type G domain. Residues 17–24 (AHIDAGKT), 81–85 (DTPGH), and 135–138 (NKMD) each bind GTP.

It belongs to the TRAFAC class translation factor GTPase superfamily. Classic translation factor GTPase family. EF-G/EF-2 subfamily.

Its subcellular location is the cytoplasm. In terms of biological role, catalyzes the GTP-dependent ribosomal translocation step during translation elongation. During this step, the ribosome changes from the pre-translocational (PRE) to the post-translocational (POST) state as the newly formed A-site-bound peptidyl-tRNA and P-site-bound deacylated tRNA move to the P and E sites, respectively. Catalyzes the coordinated movement of the two tRNA molecules, the mRNA and conformational changes in the ribosome. The protein is Elongation factor G of Heliobacterium modesticaldum (strain ATCC 51547 / Ice1).